The chain runs to 353 residues: Ribosomal RNA small subunit methyltransferase H (353 aa).

S-adenosyl-L-methionine contacts are provided by residues glycine 50–tyrosine 52, aspartate 69, phenylalanine 96, aspartate 117, and glutamine 124. The interval alanine 276–arginine 353 is disordered.

The protein belongs to the methyltransferase superfamily. RsmH family.

Its subcellular location is the cytoplasm. It carries out the reaction cytidine(1402) in 16S rRNA + S-adenosyl-L-methionine = N(4)-methylcytidine(1402) in 16S rRNA + S-adenosyl-L-homocysteine + H(+). Its function is as follows. Specifically methylates the N4 position of cytidine in position 1402 (C1402) of 16S rRNA. The sequence is that of Ribosomal RNA small subunit methyltransferase H from Methylorubrum extorquens (strain CM4 / NCIMB 13688) (Methylobacterium extorquens).